Reading from the N-terminus, the 29-residue chain is Galanin (29 aa).

Threonine 29 is modified (threonine amide).

This sequence belongs to the galanin family.

It is found in the secreted. Functionally, contracts smooth muscle of the gastrointestinal and genitourinary tract, regulates growth hormone release, modulates insulin release, and may be involved in the control of adrenal secretion. The chain is Galanin (GAL) from Gallus gallus (Chicken).